Here is a 211-residue protein sequence, read N- to C-terminus: Thymidylate kinase (211 aa).

7–14 is an ATP binding site; the sequence is GIDASGKS.

The protein belongs to the thymidylate kinase family.

It catalyses the reaction dTMP + ATP = dTDP + ADP. In terms of biological role, phosphorylation of dTMP to form dTDP in both de novo and salvage pathways of dTTP synthesis. The protein is Thymidylate kinase of Mesomycoplasma hyopneumoniae (strain 232) (Mycoplasma hyopneumoniae).